A 218-amino-acid chain; its full sequence is Putative inactive cathepsin L-like protein CTSL3P (218 aa).

Disordered stretches follow at residues Gly144–Gln173 and Gly195–Val218. The span at Glu201–Leu212 shows a compositional bias: basic and acidic residues.

Belongs to the peptidase C1 family.

The chain is Putative inactive cathepsin L-like protein CTSL3P (CTSL3P) from Homo sapiens (Human).